Here is a 259-residue protein sequence, read N- to C-terminus: (3R)-3-hydroxyacyl-CoA dehydrogenase (259 aa).

NAD(+) is bound by residues 13 to 21 and 40 to 41; these read LVTGAGSGI and DL. Residue Ser58 is modified to Phosphoserine. An NAD(+)-binding site is contributed by 72-74; that stretch reads ADV. Residue Ser154 coordinates substrate. Lys158 carries the post-translational modification N6-succinyllysine. Tyr167 serves as the catalytic Proton acceptor. NAD(+)-binding positions include 167–171 and 200–202; these read YAASK and ITT. Position 171 is an N6-succinyllysine (Lys171).

It belongs to the short-chain dehydrogenases/reductases (SDR) family. Heterotetramer with CBR4; contains two molecules of HSD17B8 and CBR4.

Its subcellular location is the mitochondrion matrix. It carries out the reaction a (3R)-3-hydroxyacyl-CoA + NAD(+) = a 3-oxoacyl-CoA + NADH + H(+). The enzyme catalyses 17beta-estradiol + NAD(+) = estrone + NADH + H(+). It catalyses the reaction testosterone + NAD(+) = androst-4-ene-3,17-dione + NADH + H(+). The catalysed reaction is 17beta-hydroxy-5alpha-androstan-3-one + NAD(+) = 5alpha-androstan-3,17-dione + NADH + H(+). It participates in steroid biosynthesis; estrogen biosynthesis. The protein operates within lipid metabolism; fatty acid biosynthesis. Its pathway is lipid metabolism; mitochondrial fatty acid beta-oxidation. Required for the solubility and assembly of the heterotetramer 3-ketoacyl-[acyl carrier protein] (ACP) reductase functional complex (KAR or KAR1) that forms part of the mitochondrial fatty acid synthase (mtFAS). Alpha-subunit of the KAR complex that acts as scaffold protein required for the stability of carbonyl reductase type-4 (CBR4, beta-subunit of the KAR complex) and for its 3-ketoacyl-ACP reductase activity, thereby participating in mitochondrial fatty acid biosynthesis. Catalyzes the NAD-dependent conversion of (3R)-3-hydroxyacyl-CoA into 3-ketoacyl-CoA (3-oxoacyl-CoA) with no chain length preference; this enzymatic activity is not needed for the KAR function. Prefers (3R)-3-hydroxyacyl-CoA over (3S)-3-hydroxyacyl-CoA and displays enzymatic activity only in the presence of NAD(+). Cooperates with enoyl-CoA hydratase 1 in mitochondria, together they constitute an alternative route to the auxiliary enzyme pathways for the breakdown of Z-PUFA (cis polyunsaturated fatty acid) enoyl-esters. NAD-dependent 17-beta-hydroxysteroid dehydrogenase with highest activity towards estradiol (17beta-estradiol or E2). Has very low activity towards testosterone and dihydrotestosterone (17beta-hydroxy-5alpha-androstan-3-one). Primarily an oxidative enzyme, it can switch to a reductive mode determined in the appropriate physiologic milieu and catalyze the reduction of estrone (E1) to form biologically active 17beta-estradiol. This is (3R)-3-hydroxyacyl-CoA dehydrogenase (HSD17B8) from Canis lupus familiaris (Dog).